An 878-amino-acid polypeptide reads, in one-letter code: Probable ATP-dependent RNA helicase ddx10 (878 aa).

Basic and acidic residues predominate over residues 1–15 (MNKDKSKQKPQKKEN). 2 disordered regions span residues 1 to 53 (MNKD…IDKV) and 102 to 130 (RGTNPLANISSTTATTTTTTATKNDKEKE). Over residues 16–30 (NNNNNKNNNNNNNKT) the composition is skewed to low complexity. The segment covering 31 to 53 (ENNKTNKDFTKNKFDKDAKIDKV) has biased composition (basic and acidic residues). Over residues 102–112 (RGTNPLANISS) the composition is skewed to polar residues. The segment covering 113 to 123 (TTATTTTTTAT) has biased composition (low complexity). A Q motif motif is present at residues 141 to 169 (TDFKDLPISQLTLKALTESKFLKLTDIQR). Residues 161–163 (FLK), glutamine 168, and 185–192 (AKTGSGKT) contribute to the ATP site. One can recognise a Helicase ATP-binding domain in the interval 172–346 (LPHTLCGRDI…RLSLQEPEYI (175 aa)). The short motif at 294–297 (DEAD) is the DEAD box element. The region spanning 372-521 (KLNMLFSFIK…ILEPNPEKLV (150 aa)) is the Helicase C-terminal domain. Positions 608-618 (DKKSKGEKDID) are enriched in basic and acidic residues. 2 disordered regions span residues 608–675 (DKKS…RKNA) and 781–878 (LQSK…KNRI). The segment covering 635–652 (SDDEDSEDDSDFQDDSDD) has biased composition (acidic residues). The segment covering 665–674 (NIEKLFDRKN) has biased composition (basic and acidic residues). Over residues 816–850 (ENGENDSDDESNDDDVWGQEYNSDDDDDDEESESE) the composition is skewed to acidic residues. Positions 860–869 (RTLEDHEESA) are enriched in basic and acidic residues.

The protein belongs to the DEAD box helicase family. DDX10/DBP4 subfamily.

It localises to the nucleus. Its subcellular location is the nucleolus. It catalyses the reaction ATP + H2O = ADP + phosphate + H(+). Functionally, probable ATP-dependent RNA helicase which may be involved in ribosome biogenesis. The polypeptide is Probable ATP-dependent RNA helicase ddx10 (ddx10) (Dictyostelium discoideum (Social amoeba)).